Reading from the N-terminus, the 491-residue chain is Eupatolide synthase (491 aa).

The chain crosses the membrane as a helical; Signal-anchor for type II membrane protein span at residues 7-27 (LPSWLLPAVVILTISCILMLW). Position 430 (C430) interacts with heme.

It belongs to the cytochrome P450 family. Requires heme as cofactor. Expressed in leaf primordia.

It is found in the membrane. It catalyses the reaction 8beta-hydroxygermacra-1(10),4,11(13)-trien-12-oate + reduced [NADPH--hemoprotein reductase] + O2 = eupatolide + oxidized [NADPH--hemoprotein reductase] + 2 H2O. The protein operates within secondary metabolite biosynthesis; terpenoid biosynthesis. Functionally, involved in the biosynthesis of germacrene-derived sesquiterpene lactones. Hydroxylates 8-beta-hydroxy-germacrene A acid to 6-alpha,8-beta-hydroxy-germacrene A acid, which, in turn, undergo spontaneous lactonization to become eupatolide. This chain is Eupatolide synthase, found in Helianthus annuus (Common sunflower).